The chain runs to 243 residues: Orotidine 5'-phosphate decarboxylase (243 aa).

Substrate is bound by residues D18, K39, 66–75, T130, R192, Q201, G221, and R222; that span reads DLKFHDIPAT. Residue K68 is the Proton donor of the active site.

The protein belongs to the OMP decarboxylase family. Type 1 subfamily. In terms of assembly, homodimer.

It carries out the reaction orotidine 5'-phosphate + H(+) = UMP + CO2. It functions in the pathway pyrimidine metabolism; UMP biosynthesis via de novo pathway; UMP from orotate: step 2/2. In terms of biological role, catalyzes the decarboxylation of orotidine 5'-monophosphate (OMP) to uridine 5'-monophosphate (UMP). The protein is Orotidine 5'-phosphate decarboxylase of Synechococcus sp. (strain CC9902).